The chain runs to 210 residues: Outer-membrane lipoprotein LolB (210 aa).

An N-terminal signal peptide occupies residues 1–29 (MSLISNNEERSLRVRYCIAIALSALLISG). A lipid anchor (N-palmitoyl cysteine) is attached at Cys30. Residue Cys30 is the site of S-diacylglycerol cysteine attachment.

Belongs to the LolB family. As to quaternary structure, monomer.

Its subcellular location is the cell outer membrane. In terms of biological role, plays a critical role in the incorporation of lipoproteins in the outer membrane after they are released by the LolA protein. This Coxiella burnetii (strain CbuG_Q212) (Coxiella burnetii (strain Q212)) protein is Outer-membrane lipoprotein LolB.